The following is a 694-amino-acid chain: Elongation factor G (694 aa).

In terms of domain architecture, tr-type G spans 6–288; sequence KLYRNIGIAA…GVIEYLPSPT (283 aa). GTP is bound by residues 15-22, 86-90, and 140-143; these read AHVDAGKT, DTPGH, and NKMD.

This sequence belongs to the TRAFAC class translation factor GTPase superfamily. Classic translation factor GTPase family. EF-G/EF-2 subfamily.

The protein localises to the cytoplasm. Catalyzes the GTP-dependent ribosomal translocation step during translation elongation. During this step, the ribosome changes from the pre-translocational (PRE) to the post-translocational (POST) state as the newly formed A-site-bound peptidyl-tRNA and P-site-bound deacylated tRNA move to the P and E sites, respectively. Catalyzes the coordinated movement of the two tRNA molecules, the mRNA and conformational changes in the ribosome. This is Elongation factor G from Legionella pneumophila (strain Corby).